Consider the following 377-residue polypeptide: MNAITSAPAERLVRVPLGERAYDILIGPGLIARAGAEIATRLKGRKAAVITDENVAPIYLDALTASLKAAGIQSSSLVLPAGEKTKSFEHLMTVCDAVLTARIERNDAVIALGGGVIGDLSGFAAGIVRRGVRFVQVPTSLLSQVDSSVGGKTGINTHHGKNLVGVFHQPDLVLADTDVLNTLSQREFRAGYAEVAKYGLIDKPDFFAWLEANWQDVFSGGAARIEAIAASCQAKSDVVVADERENGPRALLNLGHTFGHALEAATAYDSRRLVHGEGVAIGMVLAHEFSSRLNLASPDDAKRVDAHLKTVGLPTRMGDIPGELPPAEVLMDAIAQDKKVKSGQLTFILTRGIGQSFVADDVPSSEVLSFLKEKHPQ.

Residues 115–119, 139–140, K152, and K161 each bind NAD(+); these read GVIGD and TS. Positions 194, 256, and 275 each coordinate Zn(2+).

Belongs to the sugar phosphate cyclases superfamily. Dehydroquinate synthase family. It depends on Co(2+) as a cofactor. Zn(2+) serves as cofactor. The cofactor is NAD(+).

It is found in the cytoplasm. The catalysed reaction is 7-phospho-2-dehydro-3-deoxy-D-arabino-heptonate = 3-dehydroquinate + phosphate. The protein operates within metabolic intermediate biosynthesis; chorismate biosynthesis; chorismate from D-erythrose 4-phosphate and phosphoenolpyruvate: step 2/7. Functionally, catalyzes the conversion of 3-deoxy-D-arabino-heptulosonate 7-phosphate (DAHP) to dehydroquinate (DHQ). The sequence is that of 3-dehydroquinate synthase from Rhizobium rhizogenes (strain K84 / ATCC BAA-868) (Agrobacterium radiobacter).